The sequence spans 264 residues: MAEKTQRIGIFDSGLGGTTVLKELINSLPNEDYIYYGDNGNFPYGSGKTKNELQKLTERILDFFVKNNCKLVIVACNTASTAAIDYLREKFSLPIIGIIEAGVKIASKNTKNKNIAVISTKFTAESHGYKNKAKMLDSELNVKEIACIEFAQMIETGWDTFDNRKELLNKYLSEIPKNADTLVLGCTHYPLIREDIEKNIKIKVVDPAVEIVERTIQTLTSLNLLNDKKERGRIIFFVTGETYHFKPTAEKFLGKEIEIYRIPK.

Substrate is bound by residues 12-13 and 44-45; these read DS and YG. C76 acts as the Proton donor/acceptor in catalysis. 77–78 is a substrate binding site; sequence NT. Catalysis depends on C186, which acts as the Proton donor/acceptor. 187–188 is a substrate binding site; it reads TH.

The protein belongs to the aspartate/glutamate racemases family.

It catalyses the reaction L-glutamate = D-glutamate. It functions in the pathway cell wall biogenesis; peptidoglycan biosynthesis. Functionally, provides the (R)-glutamate required for cell wall biosynthesis. This chain is Glutamate racemase, found in Fusobacterium nucleatum subsp. nucleatum (strain ATCC 25586 / DSM 15643 / BCRC 10681 / CIP 101130 / JCM 8532 / KCTC 2640 / LMG 13131 / VPI 4355).